The primary structure comprises 87 residues: Putative membrane protein insertion efficiency factor (87 aa).

Belongs to the UPF0161 family.

The protein resides in the cell membrane. Could be involved in insertion of integral membrane proteins into the membrane. This is Putative membrane protein insertion efficiency factor from Streptococcus pyogenes serotype M12 (strain MGAS2096).